The primary structure comprises 161 residues: Regulator of ribonuclease activity A (161 aa).

This sequence belongs to the RraA family. Homotrimer. Binds to both RNA-binding sites in the C-terminal region of Rne and to RhlB.

The protein localises to the cytoplasm. In terms of biological role, globally modulates RNA abundance by binding to RNase E (Rne) and regulating its endonucleolytic activity. Can modulate Rne action in a substrate-dependent manner by altering the composition of the degradosome. Modulates RNA-binding and helicase activities of the degradosome. The protein is Regulator of ribonuclease activity A of Idiomarina loihiensis (strain ATCC BAA-735 / DSM 15497 / L2-TR).